A 187-amino-acid chain; its full sequence is UPF0301 protein VV2869 (187 aa).

It belongs to the UPF0301 (AlgH) family.

The chain is UPF0301 protein VV2869 from Vibrio vulnificus (strain YJ016).